A 648-amino-acid chain; its full sequence is MTRSEKTRHFGNQNYEKLRKICIKKKQPFVDTLFPPTNQSLFLEQRQSSDIVWKRPGELHPDPHLFVEGASPNDVTQGILGNCWFVSACSALTHNFKLLAQVIPDADDQEWSTKHAYAGIFRFRFWRFGKWVEVVIDDLLPTRDGKLLFARSKTPNEFWSALLEKAFAKLYGCYENLVGGHLSDALQDVSGGVAETLHVRKFLKDDPNDTELKLFNDLKTAFDKGALVVAAIAARTKEEIEESLDCGLVKGHAYAVSAVCTIDVTNPNERSFTSFIMGSKRKQNLIRLQNPWGEKEWNGAWSDDSPEWQNVSASQLSTMGVQPANSDSDDGDFWMPWESFVHYFTDISLCQLFNTSVFSFSRSYDEQIVFSEWTTNGKKSGAPDDRAGGCHNFKATFCNNPQYIFDIPSPNCSVMFALIQNDPSEGLKKREPFVTIGMHVMKVENNRQYRVHTAMHPIAISDYASGRSVYLHLQSLPRGRYLLIPTTFAPKEQTLFMLRVYSDEHIHFSPLTKHAPKLGLLKCKSAQSVTRLTIHGVDFNSASTGTHNVYAILKDSRKSFRTKTLSGVKSIQWDEQFLFHKSKNRQQYKIEVWEDRKMARDHLLAQSVIIALIDNENRDTTLQLTDPRGTVIGTVSVTVSAFDDPMYL.

The Calpain catalytic domain occupies 28 to 353 (PFVDTLFPPT…FTDISLCQLF (326 aa)). Residues C83, H252, and N290 contribute to the active site. Residues 354–509 (NTSVFSFSRS…VYSDEHIHFS (156 aa)) form a domain III region. A C2 domain is found at 502-625 (SDEHIHFSPL…ENRDTTLQLT (124 aa)).

The protein belongs to the peptidase C2 family. Requires Ca(2+) as cofactor. As to expression, expressed in neuronal, but not in GABA-ergic neurons, intestinal, hypodermal and excretory tissues.

Required for the correct female sexual development of the soma and germline in hermaphrodite animals, while being fully dispensable in males. Has calcium-dependent proteolytic activity and is involved in the cleavage of tra-2, for which it acts as a potentiator. Capable of calcium-dependent autolysis. Part of the necrosis cell death pathway. Required for necrosis of intestinal cells induced by B.thuringiensis endotoxin Cry6Aa. The sequence is that of Calpain-5 from Caenorhabditis elegans.